We begin with the raw amino-acid sequence, 140 residues long: Nucleoside diphosphate kinase (140 aa).

ATP-binding residues include K11, F59, R87, T93, R104, and N114. Catalysis depends on H117, which acts as the Pros-phosphohistidine intermediate.

The protein belongs to the NDK family. As to quaternary structure, homotetramer. Mg(2+) is required as a cofactor.

It localises to the cytoplasm. It catalyses the reaction a 2'-deoxyribonucleoside 5'-diphosphate + ATP = a 2'-deoxyribonucleoside 5'-triphosphate + ADP. The enzyme catalyses a ribonucleoside 5'-diphosphate + ATP = a ribonucleoside 5'-triphosphate + ADP. Its function is as follows. Major role in the synthesis of nucleoside triphosphates other than ATP. The ATP gamma phosphate is transferred to the NDP beta phosphate via a ping-pong mechanism, using a phosphorylated active-site intermediate. The chain is Nucleoside diphosphate kinase from Sinorhizobium medicae (strain WSM419) (Ensifer medicae).